A 147-amino-acid chain; its full sequence is UPF0306 protein YhbP (147 aa).

It belongs to the UPF0306 family.

This Salmonella paratyphi A (strain AKU_12601) protein is UPF0306 protein YhbP.